The sequence spans 1261 residues: AT-rich interactive domain-containing protein 4A (1261 aa).

The segment at 4 to 121 (ADEPAYLTVG…RHFAESETLD (118 aa)) is DNA-binding. Disordered regions lie at residues 142–169 (RGRR…DKRR), 273–310 (ESSS…LDPE), and 435–470 (APEM…PRGR). Composition is skewed to acidic residues over residues 151–165 (TEDE…EEDE) and 276–289 (SSDD…EHEE). Positions 290–299 (EKEKEAKKEE) are enriched in basic and acidic residues. Residues 300 to 310 (EELPEEELDPE) show a composition bias toward acidic residues. The region spanning 309 to 401 (PEERDNFLQQ…YLYGFEEYCR (93 aa)) is the ARID domain. Lysine 481 participates in a covalent cross-link: Glycyl lysine isopeptide (Lys-Gly) (interchain with G-Cter in SUMO2). 3 disordered regions span residues 498-582 (LENK…GTKV), 633-768 (WPLD…EAGD), and 842-953 (FSST…EDAM). Over residues 512–522 (PAAKREHELLF) the composition is skewed to basic and acidic residues. Basic residues predominate over residues 526 to 536 (STPKNKEKKIK). Over residues 541 to 551 (SERDSDEEEEK) the composition is skewed to acidic residues. Residues 552 to 564 (SQEREETESRCDS) are compositionally biased toward basic and acidic residues. Over residues 565–574 (EGEDEEDDTE) the composition is skewed to acidic residues. The region spanning 579–631 (GTKVKVKYGRGKTQKIYEASIKSTEMDDGEILYLVHYYGWNVRYDEWVKADRI) is the Tudor-knot domain. Residues 640–649 (PKKKQKKKVK) show a composition bias toward basic residues. A compositionally biased stretch (basic and acidic residues) spans 650–665 (NKEDSEKDEKRDEERQ). The span at 676 to 689 (STFSPNMPYSLSKT) shows a compositional bias: polar residues. Serine 679 carries the phosphoserine modification. Positions 690–702 (SNSEGKSDSCSSD) are enriched in low complexity. Over residues 708-753 (QLEKSSGGEDLSPDVKEELEKNENAHDDKLDEENPKIVHISKENDR) the composition is skewed to basic and acidic residues. Phosphoserine is present on serine 719. Glycyl lysine isopeptide (Lys-Gly) (interchain with G-Cter in SUMO2) cross-links involve residues lysine 723 and lysine 743. Serine 867 is subject to Phosphoserine. Composition is skewed to basic and acidic residues over residues 899 to 909 (KGAHVEQHFET) and 929 to 947 (TSEK…TPLK). Residues 955 to 968 (LIGPETLVCHEVDL) are retinoblastoma protein binding. The span at 1067–1080 (HERESREKGQKRPS) shows a compositional bias: basic and acidic residues. Disordered stretches follow at residues 1067–1173 (HERE…RTYK) and 1216–1261 (RRRK…VECR). A phosphoserine mark is found at serine 1113 and serine 1149. Residues 1230 to 1252 (HAGASMSSASSDTGMSPSSSSPP) are compositionally biased toward low complexity.

Identified in mSin3A corepressor complexes together with SIN3A, SIN3B, RBBP4, RBBP7, SAP30, BRMS1, HDAC1 and HDAC2. Interacts with BRMS1. Interacts with RB1. Interacts with ARID4B. Interacts with AR. As to expression, expressed in Sertoli cells of the testis.

The protein localises to the nucleus. Its function is as follows. DNA-binding protein which modulates activity of several transcription factors including RB1 (retinoblastoma-associated protein) and AR (androgen receptor). May function as part of an mSin3A repressor complex. Has no intrinsic transcriptional activity. Plays a role in the regulation of epigenetic modifications at the PWS/AS imprinting center near the SNRPN promoter, where it might function as part of a complex with RB1 and ARID4B. Involved in spermatogenesis, together with ARID4B, where it acts as a transcriptional coactivator for AR and enhances expression of genes required for sperm maturation. Regulates expression of the tight junction protein CLDN3 in the testis, which is important for integrity of the blood-testis barrier. Plays a role in myeloid homeostasis where it regulates the histone methylation state of bone marrow cells and expression of various genes involved in hematopoiesis. May function as a leukemia suppressor. The polypeptide is AT-rich interactive domain-containing protein 4A (Mus musculus (Mouse)).